The primary structure comprises 184 residues: Copper transporter 6 (184 aa).

Positions 1-25 (MRGMGDDGMGPMAMAPPRSGHATAA) are enriched in low complexity. The tract at residues 1-27 (MRGMGDDGMGPMAMAPPRSGHATAAAP) is disordered. Helical transmembrane passes span 64-84 (YALC…LSVL) and 124-144 (MAYL…LAAV).

The protein belongs to the copper transporter (Ctr) (TC 1.A.56) family. SLC31A subfamily.

The protein resides in the membrane. In terms of biological role, involved in the transport of copper. The chain is Copper transporter 6 (COPT6) from Oryza sativa subsp. japonica (Rice).